The sequence spans 379 residues: Queuine tRNA-ribosyltransferase (379 aa).

D94 serves as the catalytic Proton acceptor. Substrate is bound by residues 94–98 (DSGGF), D148, Q191, and G218. The RNA binding stretch occupies residues 249–255 (GVGSPDS). D268 functions as the Nucleophile in the catalytic mechanism. The interval 273 to 277 (TRIAR) is RNA binding; important for wobble base 34 recognition. Residues C306, C308, C311, and H337 each coordinate Zn(2+).

It belongs to the queuine tRNA-ribosyltransferase family. Homodimer. Within each dimer, one monomer is responsible for RNA recognition and catalysis, while the other monomer binds to the replacement base PreQ1. Requires Zn(2+) as cofactor.

The catalysed reaction is 7-aminomethyl-7-carbaguanine + guanosine(34) in tRNA = 7-aminomethyl-7-carbaguanosine(34) in tRNA + guanine. Its pathway is tRNA modification; tRNA-queuosine biosynthesis. Catalyzes the base-exchange of a guanine (G) residue with the queuine precursor 7-aminomethyl-7-deazaguanine (PreQ1) at position 34 (anticodon wobble position) in tRNAs with GU(N) anticodons (tRNA-Asp, -Asn, -His and -Tyr). Catalysis occurs through a double-displacement mechanism. The nucleophile active site attacks the C1' of nucleotide 34 to detach the guanine base from the RNA, forming a covalent enzyme-RNA intermediate. The proton acceptor active site deprotonates the incoming PreQ1, allowing a nucleophilic attack on the C1' of the ribose to form the product. After dissociation, two additional enzymatic reactions on the tRNA convert PreQ1 to queuine (Q), resulting in the hypermodified nucleoside queuosine (7-(((4,5-cis-dihydroxy-2-cyclopenten-1-yl)amino)methyl)-7-deazaguanosine). This Bacillus anthracis (strain CDC 684 / NRRL 3495) protein is Queuine tRNA-ribosyltransferase.